We begin with the raw amino-acid sequence, 168 residues long: ATP synthase subunit b (168 aa).

The chain crosses the membrane as a helical span at residues 9-29; that stretch reads AIPFGTIAYTLFIFLLLLVML.

It belongs to the ATPase B chain family. In terms of assembly, F-type ATPases have 2 components, F(1) - the catalytic core - and F(0) - the membrane proton channel. F(1) has five subunits: alpha(3), beta(3), gamma(1), delta(1), epsilon(1). F(0) has three main subunits: a(1), b(2) and c(10-14). The alpha and beta chains form an alternating ring which encloses part of the gamma chain. F(1) is attached to F(0) by a central stalk formed by the gamma and epsilon chains, while a peripheral stalk is formed by the delta and b chains.

It localises to the cell membrane. F(1)F(0) ATP synthase produces ATP from ADP in the presence of a proton or sodium gradient. F-type ATPases consist of two structural domains, F(1) containing the extramembraneous catalytic core and F(0) containing the membrane proton channel, linked together by a central stalk and a peripheral stalk. During catalysis, ATP synthesis in the catalytic domain of F(1) is coupled via a rotary mechanism of the central stalk subunits to proton translocation. In terms of biological role, component of the F(0) channel, it forms part of the peripheral stalk, linking F(1) to F(0). The polypeptide is ATP synthase subunit b (Bacillus thuringiensis (strain Al Hakam)).